A 123-amino-acid polypeptide reads, in one-letter code: ATP synthase epsilon chain (123 aa).

This sequence belongs to the ATPase epsilon chain family. F-type ATPases have 2 components, CF(1) - the catalytic core - and CF(0) - the membrane proton channel. CF(1) has five subunits: alpha(3), beta(3), gamma(1), delta(1), epsilon(1). CF(0) has three main subunits: a, b and c.

It localises to the cell membrane. Produces ATP from ADP in the presence of a proton gradient across the membrane. This is ATP synthase epsilon chain from Corynebacterium diphtheriae (strain ATCC 700971 / NCTC 13129 / Biotype gravis).